The sequence spans 260 residues: HTH-type transcriptional repressor NanR (260 aa).

The interval 1-20 (MNPFDSQSEDASDAIGRSLG) is disordered. Residues 27–95 (KKLSEMVEEE…NGERARVSRP (69 aa)) form the HTH gntR-type domain. Residues 55–74 (ERELMAFFNVGRPSVREALA) constitute a DNA-binding region (H-T-H motif).

The protein belongs to the NanR family.

Its function is as follows. Transcriptional repressor that controls expression of the genes required for the catabolism of sialic acids. The protein is HTH-type transcriptional repressor NanR of Cronobacter sakazakii (strain ATCC BAA-894) (Enterobacter sakazakii).